The sequence spans 636 residues: Nucleolin 2 (636 aa).

3 disordered regions span residues 1 to 386, 458 to 481, and 544 to 636; these read MGKS…SKTL, ANER…SRTI, and SEIG…NDEE. Composition is skewed to basic and acidic residues over residues 43 to 63 and 76 to 89; these read KELI…KKVE and EKTK…KDES. Residues 90–103 show a composition bias toward acidic residues; it reads SSEEEDDSSSDEEI. Over residues 104–118 the composition is skewed to basic and acidic residues; that stretch reads APAKKRPEPIKKAKV. 3 stretches are compositionally biased toward acidic residues: residues 122-133, 152-163, and 182-193; these read SSDDDSTSDEET and SSDDDSSSDEET. Residues 224 to 238 show a composition bias toward basic and acidic residues; that stretch reads TPAKKEPIVVKKDSS. Composition is skewed to acidic residues over residues 267–278, 299–311, and 331–341; these read SSEEESSSDDEP, SSEE…ESDD, and SSDESSDESDK. Over residues 342–367 the composition is skewed to basic and acidic residues; it reads EESKDEKVTPKKKDSDVEMVDAEQKS. Positions 368–383 are enriched in polar residues; the sequence is NAKQPKTPTNQTQGGS. 2 RRM domains span residues 384–460 and 479–558; these read KTLF…LANE and RTIY…ESRP. Polar residues predominate over residues 464–481; sequence PRNSNPGRKGEGSQSRTI. Composition is skewed to basic and acidic residues over residues 552 to 566 and 579 to 604; these read HVEE…EGRS and RHSD…DRGA. Residues 622–636 are compositionally biased toward polar residues; it reads MESSKGTKTVFNDEE.

In terms of assembly, interacts with THAL in the nucleus. As to expression, expressed at low levels in flower buds.

It is found in the nucleus. The protein localises to the nucleolus. Functionally, involved in pre-rRNA processing and ribosome assembly. In Arabidopsis thaliana (Mouse-ear cress), this protein is Nucleolin 2.